The primary structure comprises 153 residues: Ribosome maturation factor RimP (153 aa).

Belongs to the RimP family.

It is found in the cytoplasm. Its function is as follows. Required for maturation of 30S ribosomal subunits. In Clostridium tetani (strain Massachusetts / E88), this protein is Ribosome maturation factor RimP.